A 381-amino-acid polypeptide reads, in one-letter code: Alkanesulfonate monooxygenase (381 aa).

The protein belongs to the SsuD family. Homotetramer.

It carries out the reaction an alkanesulfonate + FMNH2 + O2 = an aldehyde + FMN + sulfite + H2O + 2 H(+). Its function is as follows. Catalyzes the desulfonation of aliphatic sulfonates. This Escherichia coli (strain SE11) protein is Alkanesulfonate monooxygenase.